A 465-amino-acid polypeptide reads, in one-letter code: ATP synthase subunit beta (465 aa).

152-159 (GGAGVGKT) is a binding site for ATP.

Belongs to the ATPase alpha/beta chains family. As to quaternary structure, F-type ATPases have 2 components, CF(1) - the catalytic core - and CF(0) - the membrane proton channel. CF(1) has five subunits: alpha(3), beta(3), gamma(1), delta(1), epsilon(1). CF(0) has three main subunits: a(1), b(2) and c(9-12). The alpha and beta chains form an alternating ring which encloses part of the gamma chain. CF(1) is attached to CF(0) by a central stalk formed by the gamma and epsilon chains, while a peripheral stalk is formed by the delta and b chains.

Its subcellular location is the cell inner membrane. It carries out the reaction ATP + H2O + 4 H(+)(in) = ADP + phosphate + 5 H(+)(out). In terms of biological role, produces ATP from ADP in the presence of a proton gradient across the membrane. The catalytic sites are hosted primarily by the beta subunits. This Campylobacter fetus subsp. fetus (strain 82-40) protein is ATP synthase subunit beta.